The following is a 441-amino-acid chain: tRNA modification GTPase MnmE (441 aa).

(6S)-5-formyl-5,6,7,8-tetrahydrofolate contacts are provided by R21, E78, and K117. Positions 211-363 (GIVMTIVGKP…LENKIVSKVK (153 aa)) constitute a TrmE-type G domain. Residue N221 coordinates K(+). Residues 221 to 226 (NSGKST), 240 to 246 (TDIPGTT), and 265 to 268 (DTAG) each bind GTP. S225 is a binding site for Mg(2+). K(+)-binding residues include T240, I242, and T245. T246 is a Mg(2+) binding site. K441 is a binding site for (6S)-5-formyl-5,6,7,8-tetrahydrofolate.

The protein belongs to the TRAFAC class TrmE-Era-EngA-EngB-Septin-like GTPase superfamily. TrmE GTPase family. In terms of assembly, homodimer. Heterotetramer of two MnmE and two MnmG subunits. K(+) serves as cofactor.

The protein resides in the cytoplasm. Functionally, exhibits a very high intrinsic GTPase hydrolysis rate. Involved in the addition of a carboxymethylaminomethyl (cmnm) group at the wobble position (U34) of certain tRNAs, forming tRNA-cmnm(5)s(2)U34. This chain is tRNA modification GTPase MnmE, found in Thermosipho melanesiensis (strain DSM 12029 / CIP 104789 / BI429).